The primary structure comprises 79 residues: Putative membrane protein insertion efficiency factor (79 aa).

It belongs to the UPF0161 family.

The protein resides in the cell inner membrane. In terms of biological role, could be involved in insertion of integral membrane proteins into the membrane. The polypeptide is Putative membrane protein insertion efficiency factor (Synechocystis sp. (strain ATCC 27184 / PCC 6803 / Kazusa)).